A 242-amino-acid chain; its full sequence is Aquaporin (242 aa).

Topologically, residues 1 to 11 (MNTSTKLICQK) are cytoplasmic. A helical membrane pass occupies residues 12–32 (LFAEMLCSCIFGFAVYSAILN). Over 33 to 39 (TKASNSS) the chain is Extracellular. A helical transmembrane segment spans residues 40-60 (ISSTTVGLTVCFSSISLIYTF). The Cytoplasmic segment spans residues 61–83 (CDHSVAHFNPAITIAAICTGKLD). The NPA motif lies at 69–71 (NPA). The helical transmembrane segment at 84-104 (ILLGIGYVIAQLIGFILATLL) threads the bilayer. Over 105 to 133 (TVVCFPYGYLKTMEFIASARISDDISTVN) the chain is Extracellular. Residues 134–154 (LFFTEFILSFILVFIAFEVGI) traverse the membrane as a helical segment. Residues 155-175 (NAIREPGVTLFVGIKQIDRSK) lie on the Cytoplasmic side of the membrane. Residues 176-196 (FAPLTIGITLGFLAFLASTTS) form a helical membrane-spanning segment. The Extracellular portion of the chain corresponds to 197-217 (GGAFNPGIVWGPAIMGGNFDD). The NPG signature appears at 201–203 (NPG). A helical membrane pass occupies residues 218–238 (FVIYIISELSGGLLGAFIQVF). Residues 239–242 (LLFK) lie on the Cytoplasmic side of the membrane.

It belongs to the MIP/aquaporin (TC 1.A.8) family.

Its subcellular location is the cell membrane. Functionally, water channel required to facilitate the transport of water across membranes. Involved in osmotolerance. The chain is Aquaporin (AQP) from Enterocytozoon bieneusi (strain H348) (Microsporidian parasite).